A 203-amino-acid polypeptide reads, in one-letter code: Tegument protein UL51 homolog (203 aa).

Cys4 carries S-palmitoyl cysteine; by host lipidation.

Belongs to the herpesviridae UL51 family. Oligomerizes. Interacts with U75; this interaction mediates U75 incorporation to virions. In terms of processing, phosphorylated. Post-translationally, palmitoylation is necessary for Golgi localization.

It is found in the virion tegument. The protein localises to the host cytoplasm. The protein resides in the host Golgi apparatus. Functionally, plays several roles during the time course of infection, including egress of virus particles from the perinuclear space and secondary envelopment of cytoplasmic capsids that bud into specific trans-Golgi network (TGN)-derived membranes. The polypeptide is Tegument protein UL51 homolog (U44) (Homo sapiens (Human)).